We begin with the raw amino-acid sequence, 349 residues long: Protein RecA (349 aa).

67–74 (GPESSGKT) is an ATP binding site.

This sequence belongs to the RecA family.

It localises to the cytoplasm. Functionally, can catalyze the hydrolysis of ATP in the presence of single-stranded DNA, the ATP-dependent uptake of single-stranded DNA by duplex DNA, and the ATP-dependent hybridization of homologous single-stranded DNAs. It interacts with LexA causing its activation and leading to its autocatalytic cleavage. This is Protein RecA from Chlamydia abortus (strain DSM 27085 / S26/3) (Chlamydophila abortus).